A 1080-amino-acid chain; its full sequence is DNA polymerase II large subunit (1080 aa).

The protein belongs to the archaeal DNA polymerase II family. As to quaternary structure, heterodimer of a large subunit and a small subunit.

It carries out the reaction DNA(n) + a 2'-deoxyribonucleoside 5'-triphosphate = DNA(n+1) + diphosphate. It catalyses the reaction Exonucleolytic cleavage in the 3'- to 5'-direction to yield nucleoside 5'-phosphates.. Possesses two activities: a DNA synthesis (polymerase) and an exonucleolytic activity that degrades single-stranded DNA in the 3'- to 5'-direction. Has a template-primer preference which is characteristic of a replicative DNA polymerase. The polypeptide is DNA polymerase II large subunit (Picrophilus torridus (strain ATCC 700027 / DSM 9790 / JCM 10055 / NBRC 100828 / KAW 2/3)).